The sequence spans 282 residues: Bifunctional protein FolD (282 aa).

Residues 164-166 (GAS), isoleucine 189, and isoleucine 230 contribute to the NADP(+) site.

The protein belongs to the tetrahydrofolate dehydrogenase/cyclohydrolase family. Homodimer.

It catalyses the reaction (6R)-5,10-methylene-5,6,7,8-tetrahydrofolate + NADP(+) = (6R)-5,10-methenyltetrahydrofolate + NADPH. The enzyme catalyses (6R)-5,10-methenyltetrahydrofolate + H2O = (6R)-10-formyltetrahydrofolate + H(+). The protein operates within one-carbon metabolism; tetrahydrofolate interconversion. Catalyzes the oxidation of 5,10-methylenetetrahydrofolate to 5,10-methenyltetrahydrofolate and then the hydrolysis of 5,10-methenyltetrahydrofolate to 10-formyltetrahydrofolate. This chain is Bifunctional protein FolD, found in Nitratiruptor sp. (strain SB155-2).